An 863-amino-acid polypeptide reads, in one-letter code: Transforming growth factor-beta receptor-associated protein 1 homolog (863 aa).

Residues 23–297 (RINIECIECC…QLLQDFEGKV (275 aa)) form the CNH domain. The stretch at 564 to 729 (RPTSEERRGQ…LLSVYLDPDV (166 aa)) is one CHCR repeat.

Belongs to the TRAP1 family. In terms of assembly, component of the putative class C core vacuole/endosome tethering (CORVET) complex.

It localises to the cytoplasm. It is found in the early endosome. Plays a role in the TGF-beta signaling pathway. Its function is as follows. Plays a role in vesicle-mediated protein trafficking of the endocytic membrane transport pathway. Believed to act as a component of the putative CORVET endosomal tethering complexes which is proposed to be involved in the Rab5-to-Rab7 endosome conversion probably implicating MON1A/B, and via binding SNAREs and SNARE complexes to mediate tethering and docking events during SNARE-mediated membrane fusion. The CORVET complex is proposed to function as a Rab5 effector to mediate early endosome fusion probably in specific endosome subpopulations. In Danio rerio (Zebrafish), this protein is Transforming growth factor-beta receptor-associated protein 1 homolog (tgfbrap1).